We begin with the raw amino-acid sequence, 164 residues long: MRIGLYPGTFDPITLGHQDIIQRALELVDRLVIGVAINRDKSPLFALEDRVAMVREECDRIVAKRGGEIVVHPFENLLIDCARDVGATVIVRGLRAVADFEYEFQMVGMNRAMDDSIETVFLMADARRQAIASKLVKEIARLGGDVSKFVSPTVRDALVGRFAR.

Threonine 9 contacts substrate. Residues 9–10 and histidine 17 each bind ATP; that span reads TF. Positions 41, 78, and 92 each coordinate substrate. ATP is bound by residues 93-95, glutamate 103, and 128-134; these read GLR and RQAIASK.

Belongs to the bacterial CoaD family. Homohexamer. Mg(2+) is required as a cofactor.

Its subcellular location is the cytoplasm. The catalysed reaction is (R)-4'-phosphopantetheine + ATP + H(+) = 3'-dephospho-CoA + diphosphate. It participates in cofactor biosynthesis; coenzyme A biosynthesis; CoA from (R)-pantothenate: step 4/5. In terms of biological role, reversibly transfers an adenylyl group from ATP to 4'-phosphopantetheine, yielding dephospho-CoA (dPCoA) and pyrophosphate. This is Phosphopantetheine adenylyltransferase from Paracoccus denitrificans (strain Pd 1222).